A 92-amino-acid polypeptide reads, in one-letter code: Signal recognition particle 19 kDa protein (92 aa).

It belongs to the SRP19 family. As to quaternary structure, part of the signal recognition particle protein translocation system, which is composed of SRP and FtsY. Archaeal SRP consists of a 7S RNA molecule of 300 nucleotides and two protein subunits: SRP54 and SRP19.

Its subcellular location is the cytoplasm. Functionally, involved in targeting and insertion of nascent membrane proteins into the cytoplasmic membrane. Binds directly to 7S RNA and mediates binding of the 54 kDa subunit of the SRP. The protein is Signal recognition particle 19 kDa protein of Halobacterium salinarum (strain ATCC 29341 / DSM 671 / R1).